The sequence spans 378 residues: 3-dehydroquinate synthase (378 aa).

Residues 115 to 119 (GVVGD), 139 to 140 (TS), Lys152, and Lys161 contribute to the NAD(+) site. The Zn(2+) site is built by Glu194, His256, and His275.

This sequence belongs to the sugar phosphate cyclases superfamily. Dehydroquinate synthase family. Co(2+) serves as cofactor. Requires Zn(2+) as cofactor. The cofactor is NAD(+).

The protein resides in the cytoplasm. It carries out the reaction 7-phospho-2-dehydro-3-deoxy-D-arabino-heptonate = 3-dehydroquinate + phosphate. The protein operates within metabolic intermediate biosynthesis; chorismate biosynthesis; chorismate from D-erythrose 4-phosphate and phosphoenolpyruvate: step 2/7. Its function is as follows. Catalyzes the conversion of 3-deoxy-D-arabino-heptulosonate 7-phosphate (DAHP) to dehydroquinate (DHQ). This Brucella abortus biovar 1 (strain 9-941) protein is 3-dehydroquinate synthase.